A 211-amino-acid polypeptide reads, in one-letter code: tRNA (guanine-N(7)-)-methyltransferase (211 aa).

The S-adenosyl-L-methionine site is built by Asp-40, Glu-65, Asn-92, and Asp-118. Residue Asp-118 is part of the active site. Residues Lys-122 and Asp-154 each contribute to the substrate site.

Belongs to the class I-like SAM-binding methyltransferase superfamily. TrmB family.

The enzyme catalyses guanosine(46) in tRNA + S-adenosyl-L-methionine = N(7)-methylguanosine(46) in tRNA + S-adenosyl-L-homocysteine. It participates in tRNA modification; N(7)-methylguanine-tRNA biosynthesis. Its function is as follows. Catalyzes the formation of N(7)-methylguanine at position 46 (m7G46) in tRNA. The sequence is that of tRNA (guanine-N(7)-)-methyltransferase from Microcystis aeruginosa (strain NIES-843 / IAM M-2473).